A 365-amino-acid polypeptide reads, in one-letter code: UDP-N-acetylglucosamine--N-acetylmuramyl-(pentapeptide) pyrophosphoryl-undecaprenol N-acetylglucosamine transferase (365 aa).

UDP-N-acetyl-alpha-D-glucosamine-binding positions include 10 to 12 (TGG), Asn128, Arg170, Ser199, Ile250, and Gln295.

Belongs to the glycosyltransferase 28 family. MurG subfamily.

Its subcellular location is the cell inner membrane. It catalyses the reaction di-trans,octa-cis-undecaprenyl diphospho-N-acetyl-alpha-D-muramoyl-L-alanyl-D-glutamyl-meso-2,6-diaminopimeloyl-D-alanyl-D-alanine + UDP-N-acetyl-alpha-D-glucosamine = di-trans,octa-cis-undecaprenyl diphospho-[N-acetyl-alpha-D-glucosaminyl-(1-&gt;4)]-N-acetyl-alpha-D-muramoyl-L-alanyl-D-glutamyl-meso-2,6-diaminopimeloyl-D-alanyl-D-alanine + UDP + H(+). Its pathway is cell wall biogenesis; peptidoglycan biosynthesis. In terms of biological role, cell wall formation. Catalyzes the transfer of a GlcNAc subunit on undecaprenyl-pyrophosphoryl-MurNAc-pentapeptide (lipid intermediate I) to form undecaprenyl-pyrophosphoryl-MurNAc-(pentapeptide)GlcNAc (lipid intermediate II). The sequence is that of UDP-N-acetylglucosamine--N-acetylmuramyl-(pentapeptide) pyrophosphoryl-undecaprenol N-acetylglucosamine transferase from Pelodictyon phaeoclathratiforme (strain DSM 5477 / BU-1).